A 179-amino-acid chain; its full sequence is Cytochrome b6-f complex iron-sulfur subunit 1 (179 aa).

Residues 21-43 (LLTFGTVTGVALGALYPVVNYFI) traverse the membrane as a helical segment. The 102-residue stretch at 61–162 (GNDVSVSKFL…AKTENDKIVL (102 aa)) folds into the Rieske domain. C108, H110, C126, and H129 together coordinate [2Fe-2S] cluster. A disulfide bridge links C113 with C128.

Belongs to the Rieske iron-sulfur protein family. In terms of assembly, the 4 large subunits of the cytochrome b6-f complex are cytochrome b6, subunit IV (17 kDa polypeptide, PetD), cytochrome f and the Rieske protein, while the 4 small subunits are PetG, PetL, PetM and PetN. The complex functions as a dimer. The cofactor is [2Fe-2S] cluster.

It localises to the cellular thylakoid membrane. The catalysed reaction is 2 oxidized [plastocyanin] + a plastoquinol + 2 H(+)(in) = 2 reduced [plastocyanin] + a plastoquinone + 4 H(+)(out). Its function is as follows. Component of the cytochrome b6-f complex, which mediates electron transfer between photosystem II (PSII) and photosystem I (PSI), cyclic electron flow around PSI, and state transitions. This is Cytochrome b6-f complex iron-sulfur subunit 1 from Nostoc sp. (strain PCC 7120 / SAG 25.82 / UTEX 2576).